The following is a 689-amino-acid chain: MAQTEKKAGLLRRTSSSKKPLKEKVVLMYDEIFMKEDPTKNSPRFWDELFLMKVNLEYLEGKLESLDGDEFMKIKDNINSLFHHCVQALAEEHQIKVVNALQTLCALFRGVHQKNKSATGFDIINMLIGFDKAELRMKELMESLDSLLCGDGSESLKSLCLKLLLCLVTVTDNISQNTILEYVMINSIFEAILQILSDVSSRSQHGYDSVVLLALLVNYRKYESVNPYIVKLSIVDDEPTLDGLGMVIHHALTEYNRQYKEKEEENQGGFFSTLSSMVGSMFIADADEKLSVQTNEAILLALYEAVHLNRNFITVLAQSHPEIDMAATPATPVPASPTTPLGTTPPSLDLMNNPELPLDPNLQTSNLLITFLKYSSIVMQDTKDEHRLNSARLCLIILTCIAEDQYADAFLHDDNMNFRVNLHRMPMRHRKKAADKNIPCRPLVCAVLDLMVEFVVTHMMKEFPMDLYVRCVQIIHKLICYQKKCRVRLHYTWRELWSALINLLKFLLSNETGLLAKHNIFQLALQVVNLFNMFITYGDTFLPTPSSYDELYYEIIRMHQVFDNLYCMVLRVSTNAGQWKEPASKVTHALVNVRAIINHFNPKIESYAAVNHISQLSEDQVLEVVRSNYDTLTLKLQDGLDQFERYSEQPREAGFFKELVRSISLNVRKNVSLTTMSQDVLLKEFSSIS.

Residues 520–538 (IFQLALQVVNLFNMFITYG) form a helical membrane-spanning segment.

The protein belongs to the ARMH3 family.

It is found in the golgi apparatus membrane. The protein resides in the cytoplasm. In terms of biological role, may be involved in Golgi maintenance and protein secretion. The sequence is that of Armadillo-like helical domain-containing protein 3 from Danio rerio (Zebrafish).